The primary structure comprises 468 residues: Glycosyl hydrolase family 109 protein (468 aa).

The signal sequence occupies residues 1-19 (MVYKVFLSLCIGLALSASA). NAD(+)-binding positions include 67–68 (MR), Asp-89, 138–141 (WKTH), 158–159 (EV), and Asn-187. Residues Tyr-216, Arg-232, 244–247 (YATH), and Tyr-322 each bind substrate. Residue Tyr-244 coordinates NAD(+).

This sequence belongs to the Gfo/Idh/MocA family. Glycosyl hydrolase 109 subfamily. The cofactor is NAD(+).

Its function is as follows. Glycosidase. This Porphyromonas gingivalis (strain ATCC BAA-308 / W83) protein is Glycosyl hydrolase family 109 protein.